Here is a 287-residue protein sequence, read N- to C-terminus: Thymidylate synthase (287 aa).

Residue arginine 21 coordinates dUMP. Histidine 51 contributes to the (6R)-5,10-methylene-5,6,7,8-tetrahydrofolate binding site. A dUMP-binding site is contributed by 150–151 (RR). The active-site Nucleophile is the cysteine 170. DUMP contacts are provided by residues 190–193 (RSGD), asparagine 201, and 231–233 (HIY). Aspartate 193 contributes to the (6R)-5,10-methylene-5,6,7,8-tetrahydrofolate binding site. Alanine 286 contributes to the (6R)-5,10-methylene-5,6,7,8-tetrahydrofolate binding site.

Belongs to the thymidylate synthase family. Bacterial-type ThyA subfamily. Homodimer.

Its subcellular location is the cytoplasm. It catalyses the reaction dUMP + (6R)-5,10-methylene-5,6,7,8-tetrahydrofolate = 7,8-dihydrofolate + dTMP. It functions in the pathway pyrimidine metabolism; dTTP biosynthesis. Catalyzes the reductive methylation of 2'-deoxyuridine-5'-monophosphate (dUMP) to 2'-deoxythymidine-5'-monophosphate (dTMP) while utilizing 5,10-methylenetetrahydrofolate (mTHF) as the methyl donor and reductant in the reaction, yielding dihydrofolate (DHF) as a by-product. This enzymatic reaction provides an intracellular de novo source of dTMP, an essential precursor for DNA biosynthesis. The protein is Thymidylate synthase of Mycoplasma pneumoniae (strain ATCC 29342 / M129 / Subtype 1) (Mycoplasmoides pneumoniae).